The chain runs to 290 residues: Formamidopyrimidine-DNA glycosylase (290 aa).

P2 functions as the Schiff-base intermediate with DNA in the catalytic mechanism. E3 acts as the Proton donor in catalysis. K58 functions as the Proton donor; for beta-elimination activity in the catalytic mechanism. DNA-binding residues include H97, R122, and K165. Residues 250–290 form an FPG-type; atypical zinc finger; that stretch reads KVYGREGEPCPGCDCDPVRTGGIARIVQSGRSTFYCPRHQR. The Proton donor; for delta-elimination activity role is filled by R280.

It belongs to the FPG family. Monomer. Requires Zn(2+) as cofactor.

It catalyses the reaction Hydrolysis of DNA containing ring-opened 7-methylguanine residues, releasing 2,6-diamino-4-hydroxy-5-(N-methyl)formamidopyrimidine.. The catalysed reaction is 2'-deoxyribonucleotide-(2'-deoxyribose 5'-phosphate)-2'-deoxyribonucleotide-DNA = a 3'-end 2'-deoxyribonucleotide-(2,3-dehydro-2,3-deoxyribose 5'-phosphate)-DNA + a 5'-end 5'-phospho-2'-deoxyribonucleoside-DNA + H(+). Involved in base excision repair of DNA damaged by oxidation or by mutagenic agents. Acts as a DNA glycosylase that recognizes and removes damaged bases. Has a preference for oxidized purines, such as 7,8-dihydro-8-oxoguanine (8-oxoG). Has AP (apurinic/apyrimidinic) lyase activity and introduces nicks in the DNA strand. Cleaves the DNA backbone by beta-delta elimination to generate a single-strand break at the site of the removed base with both 3'- and 5'-phosphates. The chain is Formamidopyrimidine-DNA glycosylase from Rhodospirillum centenum (strain ATCC 51521 / SW).